We begin with the raw amino-acid sequence, 430 residues long: uncharacterized protein (430 aa).

The protein localises to the cytoplasm. Its subcellular location is the nucleus. This is an uncharacterized protein from Schizosaccharomyces pombe (strain 972 / ATCC 24843) (Fission yeast).